The primary structure comprises 706 residues: Elongation factor G (706 aa).

The 290-residue stretch at 8 to 297 (ERVRNIGIAA…AVIDYLPAPT (290 aa)) folds into the tr-type G domain. GTP contacts are provided by residues 17 to 24 (AHIDAGKT), 96 to 100 (DTPGH), and 150 to 153 (NKMD).

Belongs to the TRAFAC class translation factor GTPase superfamily. Classic translation factor GTPase family. EF-G/EF-2 subfamily.

The protein localises to the cytoplasm. Its function is as follows. Catalyzes the GTP-dependent ribosomal translocation step during translation elongation. During this step, the ribosome changes from the pre-translocational (PRE) to the post-translocational (POST) state as the newly formed A-site-bound peptidyl-tRNA and P-site-bound deacylated tRNA move to the P and E sites, respectively. Catalyzes the coordinated movement of the two tRNA molecules, the mRNA and conformational changes in the ribosome. This chain is Elongation factor G, found in Cyanothece sp. (strain PCC 7425 / ATCC 29141).